The sequence spans 612 residues: MNKLSCLYCRRRKIKCDKNRPCHNCFVAKRECIIAGDNRKKRHTKTYVEALESQLANMESTLAKIKVAPVEKIPSLLAGISFKDHLSASLPNKTSYEQADTNATSKSLVDLPVSLEVRGRNTVTFYGPTSIFGTSFTSSPRPPPSASIEDTYPIIHCLQLFFKWQYAQFLFIHRESFLFEYFHRSNDNMYCSEHLIYALCAIGCRSSEDSLLVNQADAFYKMAWDALESYGLENSHITSAQCLLCLGFYKIAMGNTSHGWLLCGMAFRMGQDLGFHLDPRDWHINNVPVVSEEQAALRSRIYWGCYVADVFVSFILGRPTTLSKSDTSVPTSDDLPDFSGIEDFMLERGGAHASSITISQLLNLIVSLSNITDAILLNVFAPYSTKYGIDLRLQNVGKYNLELMKWHFELPPNLSWKKTELRDFGQSPELCFLCLYFFLIRLCLNRPFLSKKGLYVNDMTPRNICIDSIEDVKVLIRAYRENLGLHHTPLIIVYACIVSCSTVFMLFDGATPSEIVALEQDIKFFLHVLTKISKNWDLASKSINLIQKKSTMYDTNARANDTDVDFSNDKQNTHDFQISHDENLIQLFNDESNFFNLNDLGDFQSIFGGPQF.

The segment at residues 6 to 32 is a DNA-binding region (zn(2)-C6 fungal-type); the sequence is CLYCRRRKIKCDKNRPCHNCFVAKREC.

It is found in the cytoplasm. Its subcellular location is the nucleus. This is an uncharacterized protein from Schizosaccharomyces pombe (strain 972 / ATCC 24843) (Fission yeast).